The following is a 58-amino-acid chain: Small ribosomal subunit protein bS21 (58 aa).

The protein belongs to the bacterial ribosomal protein bS21 family.

The chain is Small ribosomal subunit protein bS21 from Lacticaseibacillus paracasei (strain ATCC 334 / BCRC 17002 / CCUG 31169 / CIP 107868 / KCTC 3260 / NRRL B-441) (Lactobacillus paracasei).